The sequence spans 583 residues: Vivapain-1 (583 aa).

Residues 1–34 are Cytoplasmic-facing; that stretch reads MAQDIKIMNLTKSSLEALNRNQMLSKKSSRKILK. The propeptide at 1–338 is activation peptide; the sequence is MAQDIKIMNL…SSSGANLLAD (338 aa). Residues 35–55 traverse the membrane as a helical; Signal-anchor for type II membrane protein segment; sequence ICMYAILTFAMCGVVLICLTA. The Lumenal portion of the chain corresponds to 56 to 583; the sequence is MSNSDGSLTQ…IGVEVFYPIL (528 aa). Positions 62 to 82 are enriched in polar residues; it reads SLTQSGSHNQSGSLKGLSSTP. Disordered regions lie at residues 62–83 and 104–125; these read SLTQ…STPG and PHGN…ALPN. Asparagine 70 carries N-linked (GlcNAc...) asparagine glycosylation. A compositionally biased stretch (basic and acidic residues) spans 106-119; sequence GNRDPTGDDVEKPA. Asparagine 195 and asparagine 272 each carry an N-linked (GlcNAc...) asparagine glycan. 3 cysteine pairs are disulfide-bonded: cysteine 360-cysteine 402, cysteine 395-cysteine 435, and cysteine 420-cysteine 440. The active site involves cysteine 363. N-linked (GlcNAc...) asparagine glycosylation occurs at asparagine 381. Residues asparagine 486 and asparagine 494 are each glycosylated (N-linked (GlcNAc...) asparagine). Cysteine 489 and cysteine 572 are joined by a disulfide. Residues histidine 495 and asparagine 547 contribute to the active site.

Belongs to the peptidase C1 family.

The protein resides in the membrane. Functionally, cysteine protease. In Plasmodium vivax (strain Salvador I), this protein is Vivapain-1.